Here is a 420-residue protein sequence, read N- to C-terminus: Histidine--tRNA ligase (420 aa).

The protein belongs to the class-II aminoacyl-tRNA synthetase family. In terms of assembly, homodimer.

The protein resides in the cytoplasm. The enzyme catalyses tRNA(His) + L-histidine + ATP = L-histidyl-tRNA(His) + AMP + diphosphate + H(+). This chain is Histidine--tRNA ligase, found in Saccharopolyspora erythraea (strain ATCC 11635 / DSM 40517 / JCM 4748 / NBRC 13426 / NCIMB 8594 / NRRL 2338).